The following is a 406-amino-acid chain: Tryptophan synthase beta chain (406 aa).

Lysine 99 is subject to N6-(pyridoxal phosphate)lysine.

Belongs to the TrpB family. In terms of assembly, tetramer of two alpha and two beta chains. The cofactor is pyridoxal 5'-phosphate.

It catalyses the reaction (1S,2R)-1-C-(indol-3-yl)glycerol 3-phosphate + L-serine = D-glyceraldehyde 3-phosphate + L-tryptophan + H2O. The protein operates within amino-acid biosynthesis; L-tryptophan biosynthesis; L-tryptophan from chorismate: step 5/5. Functionally, the beta subunit is responsible for the synthesis of L-tryptophan from indole and L-serine. The chain is Tryptophan synthase beta chain from Brucella abortus (strain 2308).